The following is a 379-amino-acid chain: Glutamate 5-kinase (379 aa).

K17 contributes to the ATP binding site. 3 residues coordinate substrate: S57, D144, and N156. Residue 176–177 (SD) coordinates ATP. Residues 282 to 359 (SGILMIDQGA…EEIESILGYE (78 aa)) enclose the PUA domain.

Belongs to the glutamate 5-kinase family.

Its subcellular location is the cytoplasm. It carries out the reaction L-glutamate + ATP = L-glutamyl 5-phosphate + ADP. The protein operates within amino-acid biosynthesis; L-proline biosynthesis; L-glutamate 5-semialdehyde from L-glutamate: step 1/2. In terms of biological role, catalyzes the transfer of a phosphate group to glutamate to form L-glutamate 5-phosphate. In Bartonella henselae (strain ATCC 49882 / DSM 28221 / CCUG 30454 / Houston 1) (Rochalimaea henselae), this protein is Glutamate 5-kinase.